We begin with the raw amino-acid sequence, 278 residues long: Elongation factor Ts (278 aa).

Residues T82–V85 are involved in Mg(2+) ion dislocation from EF-Tu.

Belongs to the EF-Ts family.

It is found in the cytoplasm. Its function is as follows. Associates with the EF-Tu.GDP complex and induces the exchange of GDP to GTP. It remains bound to the aminoacyl-tRNA.EF-Tu.GTP complex up to the GTP hydrolysis stage on the ribosome. The chain is Elongation factor Ts (tsf) from Streptomyces coelicolor (strain ATCC BAA-471 / A3(2) / M145).